We begin with the raw amino-acid sequence, 432 residues long: Probable M18 family aminopeptidase 2 (432 aa).

Zn(2+) contacts are provided by His86, His157, and His408.

The protein belongs to the peptidase M18 family. Zn(2+) serves as cofactor.

The polypeptide is Probable M18 family aminopeptidase 2 (Streptomyces avermitilis (strain ATCC 31267 / DSM 46492 / JCM 5070 / NBRC 14893 / NCIMB 12804 / NRRL 8165 / MA-4680)).